Consider the following 1157-residue polypeptide: Cell division cycle and apoptosis regulator protein 1 (1157 aa).

Disordered stretches follow at residues 289 to 365 and 608 to 641; these read PVRI…PRRV and LQGDRKEADGEQEEEDKEDGDAKEISTPTHWSKL. Composition is skewed to basic and acidic residues over residues 300–341 and 348–359; these read RRIE…DRSP and ERSPRRERERSP. Residues 601-625 are a coiled coil; it reads KQQLVDKLQGDRKEADGEQEEEDKE. The segment covering 617–628 has biased composition (acidic residues); sequence GEQEEEDKEDGD. Residues 643-677 form the SAP domain; the sequence is PKIMKVNDLRKELESRTLSSKGLKSQLIARLTKQL. Basic and acidic residues-rich tracts occupy residues 685–694, 701–721, 804–824, and 838–861; these read EQKELEKCEK, ERKSEDDKEEEERKRQEELER, EEKKDKEKKCKKEDKRERKED, and SSDDKIKLEEKEERKRDDRRKEDY. Disordered stretches follow at residues 685–721 and 804–926; these read EQKELEKCEKEEEEEEERKSEDDKEEEERKRQEELER and EEKK…KDKK. Residues 862-896 are compositionally biased toward acidic residues; the sequence is REEDDPDYENQDDYEPIAAEEDDGDYDDREDDDDD. A compositionally biased stretch (basic and acidic residues) spans 897-926; the sequence is SSSKDKREDKRDGNRYSKERQSKDKEKDKK. A coiled-coil region spans residues 1043–1128; sequence DVGSLLQKLE…DQLTNTIKNL (86 aa). Position 1157 is a phosphoserine (Ser1157).

It is found in the cytoplasm. The protein resides in the perinuclear region. Functionally, transcriptional coactivator for nuclear receptors which may play an important role in regulating cell growth and apoptosis. In Xenopus laevis (African clawed frog), this protein is Cell division cycle and apoptosis regulator protein 1 (ccar1).